Reading from the N-terminus, the 278-residue chain is Bis(5'-nucleosyl)-tetraphosphatase, symmetrical (278 aa).

It belongs to the Ap4A hydrolase family.

The enzyme catalyses P(1),P(4)-bis(5'-adenosyl) tetraphosphate + H2O = 2 ADP + 2 H(+). In terms of biological role, hydrolyzes diadenosine 5',5'''-P1,P4-tetraphosphate to yield ADP. This is Bis(5'-nucleosyl)-tetraphosphatase, symmetrical from Nitrosococcus oceani (strain ATCC 19707 / BCRC 17464 / JCM 30415 / NCIMB 11848 / C-107).